We begin with the raw amino-acid sequence, 519 residues long: AAA-ATPase At4g30250 (519 aa).

The signal sequence occupies residues 1–24 (MSDYWTTMASLLGMLAFCQTIVQL). 252–259 (GPPGTGKS) contributes to the ATP binding site. Disordered stretches follow at residues 315–335 (GKNK…NGSG) and 467–519 (KSVG…EKEK). Over residues 479–488 (QEEEEEAEEE) the composition is skewed to acidic residues. Positions 489 to 508 (QEKRALDSPNRRNREVCGFR) are enriched in basic and acidic residues. The segment covering 509–519 (EEEEEEDEKEK) has biased composition (acidic residues).

It belongs to the AAA ATPase family. BCS1 subfamily. The cofactor is Mg(2+).

The enzyme catalyses ATP + H2O = ADP + phosphate + H(+). The protein is AAA-ATPase At4g30250 of Arabidopsis thaliana (Mouse-ear cress).